Here is a 236-residue protein sequence, read N- to C-terminus: 2,3,4,5-tetrahydropyridine-2,6-dicarboxylate N-acetyltransferase (236 aa).

Belongs to the transferase hexapeptide repeat family. DapH subfamily.

It carries out the reaction (S)-2,3,4,5-tetrahydrodipicolinate + acetyl-CoA + H2O = L-2-acetamido-6-oxoheptanedioate + CoA. It participates in amino-acid biosynthesis; L-lysine biosynthesis via DAP pathway; LL-2,6-diaminopimelate from (S)-tetrahydrodipicolinate (acetylase route): step 1/3. Catalyzes the transfer of an acetyl group from acetyl-CoA to tetrahydrodipicolinate. The polypeptide is 2,3,4,5-tetrahydropyridine-2,6-dicarboxylate N-acetyltransferase (Clostridium perfringens (strain ATCC 13124 / DSM 756 / JCM 1290 / NCIMB 6125 / NCTC 8237 / Type A)).